The primary structure comprises 289 residues: Shikimate dehydrogenase (NADP(+)) (289 aa).

Shikimate-binding positions include 19-21 (SMS) and threonine 66. Catalysis depends on lysine 70, which acts as the Proton acceptor. The shikimate site is built by asparagine 91 and aspartate 106. Residues 131–135 (GAGGA), 155–160 (NRTLKK), and leucine 229 contribute to the NADP(+) site. Tyrosine 231 contacts shikimate. An NADP(+)-binding site is contributed by glycine 252.

The protein belongs to the shikimate dehydrogenase family. In terms of assembly, homodimer.

It catalyses the reaction shikimate + NADP(+) = 3-dehydroshikimate + NADPH + H(+). The protein operates within metabolic intermediate biosynthesis; chorismate biosynthesis; chorismate from D-erythrose 4-phosphate and phosphoenolpyruvate: step 4/7. Involved in the biosynthesis of the chorismate, which leads to the biosynthesis of aromatic amino acids. Catalyzes the reversible NADPH linked reduction of 3-dehydroshikimate (DHSA) to yield shikimate (SA). This Halothermothrix orenii (strain H 168 / OCM 544 / DSM 9562) protein is Shikimate dehydrogenase (NADP(+)).